Consider the following 335-residue polypeptide: Glycerol-3-phosphate dehydrogenase [NAD(P)+] (335 aa).

The NADPH site is built by Phe11, Arg31, and Lys107. Positions 107 and 135 each coordinate sn-glycerol 3-phosphate. Position 139 (Ala139) interacts with NADPH. Sn-glycerol 3-phosphate-binding residues include Lys190, Asp245, Ser255, Arg256, and Asn257. The active-site Proton acceptor is Lys190. Arg256 provides a ligand contact to NADPH. Residues Leu280 and Glu282 each coordinate NADPH.

The protein belongs to the NAD-dependent glycerol-3-phosphate dehydrogenase family.

Its subcellular location is the cytoplasm. The enzyme catalyses sn-glycerol 3-phosphate + NAD(+) = dihydroxyacetone phosphate + NADH + H(+). It catalyses the reaction sn-glycerol 3-phosphate + NADP(+) = dihydroxyacetone phosphate + NADPH + H(+). It functions in the pathway membrane lipid metabolism; glycerophospholipid metabolism. In terms of biological role, catalyzes the reduction of the glycolytic intermediate dihydroxyacetone phosphate (DHAP) to sn-glycerol 3-phosphate (G3P), the key precursor for phospholipid synthesis. In Anaplasma marginale (strain St. Maries), this protein is Glycerol-3-phosphate dehydrogenase [NAD(P)+].